Reading from the N-terminus, the 205-residue chain is MFLRHCITFTLIALLAGCAGFGSREALQGHGDPQQWRAHKEQLSSLDGWQINGKVGIRAPRDSGSGTLFWLQRQDYYDIRLAGPLGRGAARLTGRPGGVVLEVANQGRYEATSPEALLEEQLGWQLPVSHLVWWVRGLPAPDSKSKLTLDGDSRLASLDQDGWQVQYLSYTEQNGYWLPERLKLHGKDLDVTLVVKDWQPRQLGH.

Residues 1–17 form the signal peptide; it reads MFLRHCITFTLIALLAG. Cys-18 carries the N-palmitoyl cysteine lipid modification. The S-diacylglycerol cysteine moiety is linked to residue Cys-18.

It belongs to the LolB family. In terms of assembly, monomer.

The protein localises to the cell outer membrane. Plays a critical role in the incorporation of lipoproteins in the outer membrane after they are released by the LolA protein. The chain is Outer-membrane lipoprotein LolB from Pseudomonas putida (strain GB-1).